The sequence spans 254 residues: HTH-type transcriptional repressor DasR (254 aa).

One can recognise an HTH gntR-type domain in the interval 17–87; it reads RTARVPKYYR…QGKGTFVAKP (71 aa). The segment at residues 47–66 is a DNA-binding region (H-T-H motif); the sequence is ERTLAAEFDTSRTTVRQALQ.

The protein resides in the cytoplasm. Its activity is regulated as follows. Binding to the target genes is abolished by GlcN6P, a central molecule in N-acetylglucosamine metabolism. In terms of biological role, global regulator that is part of the nutrient-sensing system. In the absence of glucosamine 6-P (GlcN6P), represses the phosphotransferase system (PTS) specific for the uptake of N-acetylglucosamine (PTSNag), and genes involved in the metabolism of chitin, as well as several genes involved in development, thereby linking carbon availability to morphogenesis. Also regulates the expression of the ABC transporters DasABC and NgcEFG, which are involved in N,N'-diacetylchitobiose ((GlcNAc)2) uptake. Binds to the DNA consensus sequence 5'-ACTGGTCTAGACCACT-3'. This Streptomyces coelicolor (strain ATCC BAA-471 / A3(2) / M145) protein is HTH-type transcriptional repressor DasR (dasR).